We begin with the raw amino-acid sequence, 166 residues long: MNNKKLSLTLPLVGILALTACNQPKEEIDPLSQLREKGECLDCNLAGADLREFNLENARLNRSDLSGANLSGVNLRRALLDRANLTGANLSETDLTEAALTEANLAGADLSGANLERSFLRDVDLTGANLKGANLAWANLTAANLTDVDLEEAEFWETTMPDGSRR.

3 Pentapeptide repeat domains span residues 38-77, 78-117, and 118-157; these read GECLDCNLAGADLREFNLENARLNRSDLSGANLSGVNLRR, ALLDRANLTGANLSETDLTEAALTEANLAGADLSGANLER, and SFLRDVDLTGANLKGANLAWANLTAANLTDVDLEEAEFWE.

This is an uncharacterized protein from Synechocystis sp. (strain ATCC 27184 / PCC 6803 / Kazusa).